The following is a 726-amino-acid chain: Dipeptidyl-peptidase 5 (726 aa).

A signal peptide spans 1 to 19; it reads MAPAKWLIASLAFASTGLA. Residues Asn-96 and Asn-252 are each glycosylated (N-linked (GlcNAc...) asparagine). Residues 268–292 are disordered; it reads VAEPINKRNGPRTPHGIEGASSSPV. Asn-485 carries N-linked (GlcNAc...) asparagine glycosylation. Ser-558 serves as the catalytic Charge relay system. Asn-605 carries N-linked (GlcNAc...) asparagine glycosylation. Residues Asp-641 and His-673 each act as charge relay system in the active site. A glycan (N-linked (GlcNAc...) asparagine) is linked at Asn-699.

Belongs to the peptidase S9C family.

The protein localises to the secreted. In terms of biological role, extracellular dipeptidyl-peptidase which removes N-terminal dipeptides sequentially from polypeptides having unsubstituted N-termini. Contributes to pathogenicity. The chain is Dipeptidyl-peptidase 5 (DPP5) from Arthroderma otae (strain ATCC MYA-4605 / CBS 113480) (Microsporum canis).